Consider the following 177-residue polypeptide: O-acetyl-ADP-ribose deacetylase (177 aa).

Positions 1–175 (MNSRIHVIHG…LYQRLLTQQG (175 aa)) constitute a Macro domain. Residues 11–12 (DI), asparagine 25, 33–35 (GVD), and 122–126 (STGVY) contribute to the substrate site. Aspartate 35 acts as the Proton acceptor in catalysis.

The protein belongs to the MacroD-type family. YmdB subfamily. In terms of assembly, homodimer. Interacts with RNase III.

It carries out the reaction 3''-O-acetyl-ADP-D-ribose + H2O = ADP-D-ribose + acetate + H(+). The enzyme catalyses 2''-O-acetyl-ADP-D-ribose + H2O = ADP-D-ribose + acetate + H(+). In terms of biological role, deacetylates O-acetyl-ADP ribose to yield ADP-ribose and free acetate. Down-regulates ribonuclease 3 (RNase III) activity. Acts by interacting directly with the region of the ribonuclease that is required for dimerization/activation. The sequence is that of O-acetyl-ADP-ribose deacetylase from Citrobacter rodentium (strain ICC168) (Citrobacter freundii biotype 4280).